A 303-amino-acid polypeptide reads, in one-letter code: 2-dehydropantoate 2-reductase (303 aa).

Residues 7-12 (GCGALG), asparagine 98, and alanine 122 each bind NADP(+). Asparagine 98 contacts substrate. The active-site Proton donor is lysine 176. Substrate contacts are provided by asparagine 180, asparagine 184, asparagine 194, and serine 244. Glutamate 256 is an NADP(+) binding site.

Belongs to the ketopantoate reductase family. As to quaternary structure, monomer.

The protein resides in the cytoplasm. It carries out the reaction (R)-pantoate + NADP(+) = 2-dehydropantoate + NADPH + H(+). It functions in the pathway cofactor biosynthesis; (R)-pantothenate biosynthesis; (R)-pantoate from 3-methyl-2-oxobutanoate: step 2/2. Functionally, catalyzes the NADPH-dependent reduction of ketopantoate into pantoic acid. In Escherichia coli O157:H7, this protein is 2-dehydropantoate 2-reductase (panE).